Consider the following 169-residue polypeptide: Regulator of ribonuclease activity A (169 aa).

This sequence belongs to the RraA family. As to quaternary structure, homotrimer. Binds to both RNA-binding sites in the C-terminal region of Rne and to RhlB.

The protein localises to the cytoplasm. Functionally, globally modulates RNA abundance by binding to RNase E (Rne) and regulating its endonucleolytic activity. Can modulate Rne action in a substrate-dependent manner by altering the composition of the degradosome. Modulates RNA-binding and helicase activities of the degradosome. The chain is Regulator of ribonuclease activity A from Photorhabdus laumondii subsp. laumondii (strain DSM 15139 / CIP 105565 / TT01) (Photorhabdus luminescens subsp. laumondii).